Consider the following 84-residue polypeptide: Small ribosomal subunit protein uS17 (84 aa).

This sequence belongs to the universal ribosomal protein uS17 family. Part of the 30S ribosomal subunit.

In terms of biological role, one of the primary rRNA binding proteins, it binds specifically to the 5'-end of 16S ribosomal RNA. This is Small ribosomal subunit protein uS17 from Borrelia duttonii (strain Ly).